We begin with the raw amino-acid sequence, 379 residues long: Tryptophan 2,3-dioxygenase (379 aa).

Substrate is bound by residues 57–61 and Arg128; that span reads FIITH. His312 lines the heme pocket. A substrate-binding site is contributed by Thr327.

The protein belongs to the tryptophan 2,3-dioxygenase family. As to quaternary structure, homotetramer. Dimer of dimers. Requires heme as cofactor.

The enzyme catalyses L-tryptophan + O2 = N-formyl-L-kynurenine. Its pathway is amino-acid degradation; L-tryptophan degradation via kynurenine pathway; L-kynurenine from L-tryptophan: step 1/2. The protein operates within pigment biosynthesis; ommochrome biosynthesis. Its function is as follows. Heme-dependent dioxygenase that catalyzes the oxidative cleavage of the L-tryptophan (L-Trp) pyrrole ring and converts L-tryptophan to N-formyl-L-kynurenine. Catalyzes the oxidative cleavage of the indole moiety. In Drosophila yakuba (Fruit fly), this protein is Tryptophan 2,3-dioxygenase.